Reading from the N-terminus, the 709-residue chain is SH3 domain-containing kinase-binding protein 1 (709 aa).

SH3 domains lie at 1–58 and 98–157; these read MVEA…EIKK and RRRR…ELSG. Residues serine 156, serine 159, serine 227, and serine 274 each carry the phosphoserine modification. Over residues 221–239 the composition is skewed to low complexity; sequence ETTGSESDGGDSSSTKSEG. Residues 221 to 242 are disordered; the sequence is ETTGSESDGGDSSSTKSEGANG. 3 disordered regions span residues 289–309, 372–485, and 511–650; these read GKKL…MDSR, SDFD…KIDL, and DSVI…VSSQ. Threonine 298 is modified (phosphothreonine). In terms of domain architecture, SH3 3 spans 311-372; that stretch reads KTKDYCKVIF…PDNFVKLLPS (62 aa). Positions 399–434 are enriched in basic and acidic residues; it reads TERKHEIKKIPPERPETLPNRTEEKERPEREPKLDL. Serine 480 bears the Phosphoserine mark. Positions 513–528 are enriched in polar residues; it reads VISSTEKLSHPTTSRP. Low complexity predominate over residues 535 to 554; it reads PPSQSLTSSSLSSPDIFDSP. Serine 553, serine 555, and serine 565 each carry phosphoserine. The span at 561-575 shows a compositional bias: basic and acidic residues; it reads EEHISLAHRGIDVSK. Residues 579 to 592 are compositionally biased toward polar residues; that stretch reads KTVTISQVSDNKTS. Over residues 600–623 the composition is skewed to low complexity; the sequence is MAAASSGPASLSSVASSPMSSSLG. The segment covering 627–636 has biased composition (polar residues); sequence QRASSPSLFS. Serine 631 is modified (phosphoserine). The stretch at 646-708 forms a coiled coil; sequence AVSSQAAIEE…VNDIKKALQS (63 aa).

As to quaternary structure, can self-associate and form homotetramers. Interacts with CD2, F-actin capping protein, PIK3R3, GRB2, EGFR, MET, BLNK, MAP3K4, PDCD6IP, SPRY2, ARHGAP17, ARHGAP27, CRK, BCAR1, SOS1, ASAP1, ARAP3, HIP1R, SYNJ2, INPP5D and STAP1. Interacts with E3 ubiquitin-protein ligase CBL. Interacts with CBLB, but does not interact with CBLC. Two molecules of SH3KBP1 seem to bind through their respective SH3 1 domain to one molecule of CBLB. The interaction with CBL or CBLB and EGFR is increased upon EGF stimulation. The interaction with CBL is attenuated by PDCD6IP. Interacts (via SH3 domains) with ARAP1. The interaction is independent of EGF and does not affect ARAP1 GTPase-activating activity but is involved in regulating ubiquitination and endocytic trafficking of EGFR. ARAP1 competes with CBL for binding to SH3KBP1 and prevents interaction of CBL with SH3KBP1; this is likely to regulate SH3KBP1-mediated internalization of EGFR. Interacts through its proline-rich region with the SH3 domain of endophilins SH3GL1, SH3GL2 and SH3GL3. The SH3KBP1-endophilin complex seems to associate with a complex containing the phosphorylated receptor (EGFR or MET) and phosphorylated CBL. Probably associates with ASAP1 and phosphorylated EGFR. Probably part of a complex consisting of at least SH3KBP1, ASAP1 and ARAP3. Interacts with focal adhesion kinases PTK2/FAK1 and PTK2B/PYK2, probably as a dimer. Interacts with DAB2 and probably associates with chathrin through its interaction with DAB2. Part of a complex consisting of SH3KBP1, DAB2, and clathrin heavy chain. DAB2 and clathrin dissociate from SH3KBP1 following growth factor treatment, enabling interaction with CBL. Interacts with DDN and probably associates with MAGI2 through its interaction with DDN. Interacts with the SH3 domains of SRC tyrosine-protein kinases SRC, LCK, LYN, FGR, FYN and HCK. Interacts with TRADD, BIRC2, TRAF1, TRAF2 and TNFR1, and the association with a TNFR1-associated complex upon stimulation with TNF-alpha seems to be mediated by SRC. Probably part of a complex consisting of at least SH3KBP1, ASAP1 and ARAP3. Interacts (via SH3 domains) with SHKBP1 (via PXXXPR motifs). Interacts with ATX2. Interaction with CBL is abolished in the presence of SHKBP1. Interacts (via SH3 domains) with ZFP36 (via extreme C-terminal region). Interacts with MAP3K4; this interaction enhances the association with ZFP36. Post-translationally, monoubiquitinated by CBL and CBLB after EGF stimulation; probably on its C-terminus.

It localises to the cytoplasm. Its subcellular location is the cytoskeleton. The protein resides in the cytoplasmic vesicle membrane. It is found in the synapse. The protein localises to the synaptosome. It localises to the cell junction. Its subcellular location is the focal adhesion. Adapter protein involved in regulating diverse signal transduction pathways. Involved in the regulation of endocytosis and lysosomal degradation of ligand-induced receptor tyrosine kinases, including EGFR and MET/hepatocyte growth factor receptor, through an association with CBL and endophilins. The association with CBL, and thus the receptor internalization, may be inhibited by an interaction with PDCD6IP and/or SPRY2. Involved in regulation of ligand-dependent endocytosis of the IgE receptor. Attenuates phosphatidylinositol 3-kinase activity by interaction with its regulatory subunit. May be involved in regulation of cell adhesion; promotes the interaction between TTK2B and PDCD6IP. May be involved in the regulation of cellular stress response via the MAPK pathways through its interaction with MAP3K4. Is involved in modulation of tumor necrosis factor mediated apoptosis. Plays a role in the regulation of cell morphology and cytoskeletal organization. Required in the control of cell shape and migration. Has an essential role in the stimulation of B cell activation. The chain is SH3 domain-containing kinase-binding protein 1 (Sh3kbp1) from Mus musculus (Mouse).